The primary structure comprises 153 residues: Nascent polypeptide-associated complex subunit beta (153 aa).

Disordered stretches follow at residues 1-40 (MSDVQERLKKLGLGARTGTGKGTPRRKVKRAPARSGADDK) and 126-153 (LQKEKGEDDDEIPDLVEGENFEGEPKVE). Basic residues predominate over residues 23-32 (TPRRKVKRAP). The NAC-A/B domain maps to 36–101 (GADDKKLQLA…GEDKELTELV (66 aa)). Acidic residues predominate over residues 132-147 (EDDDEIPDLVEGENFE).

This sequence belongs to the NAC-beta family. As to quaternary structure, part of the nascent polypeptide-associated complex (NAC), consisting of EGD2 and EGD1. NAC associates with ribosomes via EGD1.

It localises to the cytoplasm. The protein resides in the nucleus. In terms of biological role, component of the nascent polypeptide-associated complex (NAC), a dynamic component of the ribosomal exit tunnel, protecting the emerging polypeptides from interaction with other cytoplasmic proteins to ensure appropriate nascent protein targeting. The NAC complex also promotes mitochondrial protein import by enhancing productive ribosome interactions with the outer mitochondrial membrane and blocks the inappropriate interaction of ribosomes translating non-secretory nascent polypeptides with translocation sites in the membrane of the endoplasmic reticulum. EGD1 may act as a transcription factor that exert a negative effect on the expression of several genes that are transcribed by RNA polymerase II. This is Nascent polypeptide-associated complex subunit beta (EGD1) from Gibberella zeae (strain ATCC MYA-4620 / CBS 123657 / FGSC 9075 / NRRL 31084 / PH-1) (Wheat head blight fungus).